The primary structure comprises 37 residues: MTTFSSFPSIFVPLVGLVFPAIAMASLSLYVQKTKIF.

Residues 10 to 30 (IFVPLVGLVFPAIAMASLSLY) traverse the membrane as a helical segment.

The protein belongs to the PsaI family.

The protein resides in the plastid. Its subcellular location is the chloroplast thylakoid membrane. Functionally, may help in the organization of the PsaL subunit. The sequence is that of Photosystem I reaction center subunit VIII from Gossypium hirsutum (Upland cotton).